The primary structure comprises 359 residues: MGKVLQKEAFGLAAKDNSGVLSPFSFTRRETGEKDVRFKVLFCGICHSDLHMVKNEWGMSTYPLVPGHEIVGVVTEVGAKVTKFKTGEKVGVGCLVSSCGSCDSCTEGMENYCPKSIQTYGFPYYDNTITYGGYSDHMVCEEGFVIRIPDNLPLDAAAPLLCAGITVYSPMKYHGLDKPGMHIGVVGLGGLGHVGVKFAKAMGTKVTVISTSEKKRDEAINRLGADAFLVSRDPKQIKDAMGTMDGIIDTVSATHSLLPLLGLLKHKGKLVMVGAPEKPLELPVMPLIFERKMVMGSMIGGIKETQEMIDMAGKHNITADIELISADYVNTAMERLEKADVRYRFVIDVANTLKPNPNL.

Cysteine 46 serves as a coordination point for Zn(2+). Residue serine 48 coordinates NADP(+). Residues histidine 68, glutamate 69, cysteine 99, cysteine 102, cysteine 105, cysteine 113, and cysteine 162 each contribute to the Zn(2+) site. NADP(+) is bound by residues threonine 166, 187-192, 210-215, threonine 250, glycine 274, and 297-299; these read GLGGLG, STSEKK, and SMI.

It belongs to the zinc-containing alcohol dehydrogenase family. In terms of assembly, homodimer. Zn(2+) is required as a cofactor. As to expression, expressed in the differentiation and elongation zones of primary and lateral roots. Expressed in the hypocotyl, cotyledon veins, vasculature of the first rosette leaves, hydathodes and trichomes. In stems, expressed in the vascular cambium and developing xylem tissues. Expressed in the style, anthers, stamen filaments, stigmatic regions in flowers, and abscission and style regions of siliques.

The enzyme catalyses (E)-cinnamyl alcohol + NADP(+) = (E)-cinnamaldehyde + NADPH + H(+). It participates in aromatic compound metabolism; phenylpropanoid biosynthesis. Its function is as follows. Involved in lignin biosynthesis. Catalyzes the final step specific for the production of lignin monomers. Catalyzes the NADPH-dependent reduction of coniferaldehyde, 5-hydroxyconiferaldehyde, sinapaldehyde, 4-coumaraldehyde and caffeyl aldehyde to their respective alcohols. This chain is Cinnamyl alcohol dehydrogenase 8 (CAD8), found in Arabidopsis thaliana (Mouse-ear cress).